We begin with the raw amino-acid sequence, 1193 residues long: uncharacterized protein (1193 aa).

The N-terminal stretch at 1–25 (MKIKFINYLLLFFIIFLNYNGFVKS) is a signal peptide. The Extracellular portion of the chain corresponds to 26–1172 (DCYQELDLVL…PQDPSDELST (1147 aa)). N90, N183, N226, N265, N281, N345, N357, N436, N516, N552, N583, N627, N712, N765, N822, N938, N1038, and N1092 each carry an N-linked (GlcNAc...) asparagine glycan. Residues 1173–1193 (SSFVQVNLLFLSILIFTIFIF) traverse the membrane as a helical segment.

The protein localises to the membrane. This is an uncharacterized protein from Dictyostelium discoideum (Social amoeba).